A 511-amino-acid chain; its full sequence is U3 snoRNP-associated protein-like YAOH (511 aa).

Over residues 1-18 (MAPRPRKRVSRPKPRATS) the composition is skewed to basic residues. Positions 1–117 (MAPRPRKRVS…EDEDEGEEAG (117 aa)) are disordered. 2 stretches are compositionally biased toward acidic residues: residues 44–53 (EDIESEDSDL) and 66–80 (DDGE…EQET). Basic and acidic residues predominate over residues 81 to 105 (AGEKKMRIAKELLKKVTDAARRRRE). WD repeat units follow at residues 158–197 (KHRQ…SEKY), 217–256 (KRSK…HIQA), 259–298 (GHRG…YMNC), 301–339 (GHQN…QLLF), 342–380 (PATA…PTHI), 412–451 (SAQS…KGIR), and 457–497 (RLDG…QNGV).

It belongs to the WD repeat RRP9 family.

It localises to the nucleus. The protein resides in the nucleolus. In terms of biological role, component of a nucleolar small nuclear ribonucleoprotein particle (snoRNP) thought to participate in the processing and modification of pre-ribosomal RNA. Essential for embryogenesis. The protein is U3 snoRNP-associated protein-like YAOH of Oryza sativa subsp. japonica (Rice).